A 236-amino-acid polypeptide reads, in one-letter code: 2,3,4,5-tetrahydropyridine-2,6-dicarboxylate N-acetyltransferase (236 aa).

The protein belongs to the transferase hexapeptide repeat family. DapH subfamily.

The catalysed reaction is (S)-2,3,4,5-tetrahydrodipicolinate + acetyl-CoA + H2O = L-2-acetamido-6-oxoheptanedioate + CoA. It participates in amino-acid biosynthesis; L-lysine biosynthesis via DAP pathway; LL-2,6-diaminopimelate from (S)-tetrahydrodipicolinate (acetylase route): step 1/3. In terms of biological role, catalyzes the transfer of an acetyl group from acetyl-CoA to tetrahydrodipicolinate. The protein is 2,3,4,5-tetrahydropyridine-2,6-dicarboxylate N-acetyltransferase of Clostridium botulinum (strain Eklund 17B / Type B).